Here is a 380-residue protein sequence, read N- to C-terminus: MAPNIRKSHPLLKMINNSLIDLPTPSNISAWWNFGSLLAVCLITQILTGLLLAMHYTADTTLAFSSVAHTCRNVQYGWLIRNLHANGASFFFICIFLHIGRGLYYGSYLYKETWNTGVILLLTLMATAFVGYVLPWGQMSFWGATVITNLFSAVPYIGQTLVEWAWGGFSVDNPTLTRFFALHFLLPFVIAGITIIHLTFLHESGSNNPLGISSNSDKIPFHPYYSIKDILGLTLMFTPFLMLALFSPNLLGDPENFTPANPLVTPPHIKPEWYFLFAYAILRSIPNKLGGVLALAASVLILLLIPFLHKSKQRTMTFRPLSQTLFWLLVANLLILTWIGSQPVEHPFIIIGQMASLSYFSILLILFPMIGTLENKILNY.

4 helical membrane passes run 34–54 (FGSL…LLAM), 78–99 (WLIR…FLHI), 114–134 (WNTG…GYVL), and 179–199 (FFAL…IHLT). The heme b site is built by His-84 and His-98. The heme b site is built by His-183 and His-197. Position 202 (His-202) interacts with a ubiquinone. 4 consecutive transmembrane segments (helical) span residues 227–247 (IKDI…ALFS), 289–309 (LGGV…PFLH), 321–341 (LSQT…WIGS), and 348–368 (FIII…ILFP).

It belongs to the cytochrome b family. As to quaternary structure, the cytochrome bc1 complex contains 11 subunits: 3 respiratory subunits (MT-CYB, CYC1 and UQCRFS1), 2 core proteins (UQCRC1 and UQCRC2) and 6 low-molecular weight proteins (UQCRH/QCR6, UQCRB/QCR7, UQCRQ/QCR8, UQCR10/QCR9, UQCR11/QCR10 and a cleavage product of UQCRFS1). This cytochrome bc1 complex then forms a dimer. Heme b serves as cofactor.

The protein localises to the mitochondrion inner membrane. In terms of biological role, component of the ubiquinol-cytochrome c reductase complex (complex III or cytochrome b-c1 complex) that is part of the mitochondrial respiratory chain. The b-c1 complex mediates electron transfer from ubiquinol to cytochrome c. Contributes to the generation of a proton gradient across the mitochondrial membrane that is then used for ATP synthesis. This is Cytochrome b (MT-CYB) from Alectoris rufa (Red-legged partridge).